Consider the following 503-residue polypeptide: uncharacterized protein (503 aa).

This sequence belongs to the Mg-chelatase subunits D/I family. ComM subfamily.

This is an uncharacterized protein from Mycobacterium bovis (strain ATCC BAA-935 / AF2122/97).